The primary structure comprises 766 residues: BMP/retinoic acid-inducible neural-specific protein 3 (766 aa).

Residues 1 to 33 form the signal peptide; the sequence is MIWRSRAGAELFSLMALWEWIALSLHCWVLAVA. One can recognise an MACPF domain in the interval 74–264; it reads RYKIYREFGR…FVQAALSYIA (191 aa). Asn-168, Asn-337, Asn-456, Asn-562, Asn-609, and Asn-641 each carry an N-linked (GlcNAc...) asparagine glycan.

It belongs to the BRINP family. Strongly expressed in oral keratinocytes compared to the weak expression in tongue squamous cell carcinoma (SCC). Expressed in endothelial and aortic smooth muscle cells. Overexpressed in gonadotropinomas compared to normal pituitarie tissues.

It localises to the secreted. The protein resides in the mitochondrion. Functionally, inhibits neuronal cell proliferation by negative regulation of the cell cycle transition. Promotes pituitary gonadotrope cell proliferation, migration and invasion, when overexpressed. May play a role in cell pituitary tumor development. The protein is BMP/retinoic acid-inducible neural-specific protein 3 (BRINP3) of Homo sapiens (Human).